The primary structure comprises 146 residues: Keratin-associated protein 4-1 (146 aa).

18 repeat units span residues 5–9 (CCGSV), 24–28 (CCRPS), 29–33 (CCQTT), 34–38 (CCCPS), 44–48 (CCRPS), 54–58 (CCQTT), 59–63 (CCRPS), 64–68 (CCHPV), 69–73 (CCQTT), 83–87 (CCRPL), 88–92 (CCQTT), 102–106 (CCRPL), 107–111 (CCQTT), 121–125 (CCRPL), 126–130 (CCQTT), 131–135 (CCRAT), 136–140 (CCRPS), and 141–145 (CCGSS). Residues 5–145 (CCGSVCSDQG…CCRPSCCGSS (141 aa)) are 18 X 5 AA repeats of C-C-[GRQC]-[SPT]-[VSTL].

It belongs to the KRTAP type 4 family. In terms of assembly, interacts with hair keratins. In terms of tissue distribution, expressed in the hair follicles.

Functionally, in the hair cortex, hair keratin intermediate filaments are embedded in an interfilamentous matrix, consisting of hair keratin-associated proteins (KRTAP), which are essential for the formation of a rigid and resistant hair shaft through their extensive disulfide bond cross-linking with abundant cysteine residues of hair keratins. The matrix proteins include the high-sulfur and high-glycine-tyrosine keratins. The protein is Keratin-associated protein 4-1 (KRTAP4-1) of Homo sapiens (Human).